We begin with the raw amino-acid sequence, 258 residues long: Phosphoribosylaminoimidazole-succinocarboxamide synthase (258 aa).

Belongs to the SAICAR synthetase family.

It carries out the reaction 5-amino-1-(5-phospho-D-ribosyl)imidazole-4-carboxylate + L-aspartate + ATP = (2S)-2-[5-amino-1-(5-phospho-beta-D-ribosyl)imidazole-4-carboxamido]succinate + ADP + phosphate + 2 H(+). The protein operates within purine metabolism; IMP biosynthesis via de novo pathway; 5-amino-1-(5-phospho-D-ribosyl)imidazole-4-carboxamide from 5-amino-1-(5-phospho-D-ribosyl)imidazole-4-carboxylate: step 1/2. This chain is Phosphoribosylaminoimidazole-succinocarboxamide synthase, found in Maricaulis maris (strain MCS10) (Caulobacter maris).